The sequence spans 158 residues: D-aminoacyl-tRNA deacylase (158 aa).

A Gly-cisPro motif, important for rejection of L-amino acids motif is present at residues 138 to 139 (GP).

Belongs to the DTD family. As to quaternary structure, homodimer.

The protein resides in the cytoplasm. It catalyses the reaction glycyl-tRNA(Ala) + H2O = tRNA(Ala) + glycine + H(+). It carries out the reaction a D-aminoacyl-tRNA + H2O = a tRNA + a D-alpha-amino acid + H(+). In terms of biological role, an aminoacyl-tRNA editing enzyme that deacylates mischarged D-aminoacyl-tRNAs. Hydrolyzes correctly charged, achiral, glycyl-tRNA(Gly). Deacylates mischarged endogenous and E.coli glycyl-tRNA(Ala), protecting cells against glycine mischarging by AlaRS. Acts via tRNA-based rather than protein-based catalysis; rejects L-amino acids rather than detecting D-amino acids in the active site. By recycling D-aminoacyl-tRNA to D-amino acids and free tRNA molecules, this enzyme counteracts the toxicity associated with the formation of D-aminoacyl-tRNA entities in vivo and helps enforce protein L-homochirality. In Drosophila melanogaster (Fruit fly), this protein is D-aminoacyl-tRNA deacylase.